Consider the following 923-residue polypeptide: Ubiquitin carboxyl-terminal hydrolase 10 (923 aa).

The 116-residue stretch at phenylalanine 19–isoleucine 134 folds into the DUSP domain. Residues asparagine 65–serine 91 form a disordered region. The region spanning alanine 304–valine 895 is the USP domain. Cysteine 313 (nucleophile) is an active-site residue. Histidine 853 acts as the Proton acceptor in catalysis.

The protein belongs to the peptidase C19 family.

The catalysed reaction is Thiol-dependent hydrolysis of ester, thioester, amide, peptide and isopeptide bonds formed by the C-terminal Gly of ubiquitin (a 76-residue protein attached to proteins as an intracellular targeting signal).. Recognizes and hydrolyzes the peptide bond at the C-terminal Gly of ubiquitin. Involved in the processing of poly-ubiquitin precursors as well as that of ubiquitinated proteins. This is Ubiquitin carboxyl-terminal hydrolase 10 (UBP10) from Arabidopsis thaliana (Mouse-ear cress).